The following is a 561-amino-acid chain: Efflux pump bfoC (561 aa).

The segment at 1 to 55 (MSDTARILGGPSASSSRDGGMELNSFTEVSQTNSRSHSTKEEEGQVDDQQRPARE) is disordered. The span at 24-36 (NSFTEVSQTNSRS) shows a compositional bias: polar residues. Positions 38–55 (STKEEEGQVDDQQRPARE) are enriched in basic and acidic residues. 13 helical membrane-spanning segments follow: residues 59 to 79 (GVLG…CIFC), 103 to 123 (DVGW…LTFG), 128 to 148 (FFPI…GSFI), 164 to 184 (VAGL…SQCV), 194 to 214 (GFIM…GGAF), 222 to 242 (WCFY…LFTF), 257 to 277 (AVGL…CLLL), 293 to 313 (VVAL…LQLW), 335 to 355 (LYGF…PIWF), 378 to 398 (VVFA…GPFM), 425 to 445 (IGYQ…PIFV), 457 to 477 (TATA…VSVA), and 530 to 550 (VHTF…ATVI).

This sequence belongs to the major facilitator superfamily. TCR/Tet family.

Its subcellular location is the cell membrane. In terms of biological role, efflux pump; part of the gene cluster that mediates the biosynthesis of bifonsecin B, a dimeric gamma-naphthopyrone. This Aspergillus brasiliensis (strain CBS 101740 / IMI 381727 / IBT 21946) protein is Efflux pump bfoC.